The primary structure comprises 88 residues: N-alpha-acetyltransferase 38, NatC auxiliary subunit (88 aa).

One can recognise a Sm domain in the interval 1-72 (MDILKLSDFI…VKTIMIDKPV (72 aa)).

Component of the N-terminal acetyltransferase C (NatC) complex, composed of the catalytic subunit Naa30/MAK3, a large auxiliary subunit Naa35/MAK10 and a small auxiliary subunit Naa38/MAK31.

Its function is as follows. Component of the NatC N-terminal acetyltransferase, which associates with the ribosome to acetylate nascent protein chains in a cotranslational manner. NatC acetylates protein N-termini starting with methionine, followed by a hydrophobic or amphipathic amino acid, with amino acids at positions 3 and 4 also contributing to NatC recognition. The first 4 amino acids of cognate substrates are recognized at the Naa30/MAK3-Naa35/MAK10 interface. NatC-dependent acetylation targets various substrate proteins to specific subcellular sites, including isoform 2 of tRNA-specific methyltransferase Trm1 to the inner nuclear membrane. Catalyzes the acetylation of the N-terminal Met of ARF-like GTPase ARL3, which is required for its Golgi localization via interaction with the Golgi-localized integral membrane protein SYS1, which may serve as a receptor for acetylated ARL3. Catalyzes the acetylation of the N-terminal Met of L-A virus Gag protein. MAK31 is necessary for the structural stability of L-A double-stranded RNA-containing particles. Necessary for growth at 37 degrees Celsius as well as for maintenance of the killer plasmid. This Saccharomyces cerevisiae (strain ATCC 204508 / S288c) (Baker's yeast) protein is N-alpha-acetyltransferase 38, NatC auxiliary subunit (MAK31).